Consider the following 362-residue polypeptide: Chorismate synthase (362 aa).

NADP(+) is bound by residues R48 and R54. FMN is bound by residues 125–127 (RSS), 238–239 (NA), G286, 301–305 (KPTSS), and R327.

Belongs to the chorismate synthase family. Homotetramer. FMNH2 is required as a cofactor.

The enzyme catalyses 5-O-(1-carboxyvinyl)-3-phosphoshikimate = chorismate + phosphate. It participates in metabolic intermediate biosynthesis; chorismate biosynthesis; chorismate from D-erythrose 4-phosphate and phosphoenolpyruvate: step 7/7. Catalyzes the anti-1,4-elimination of the C-3 phosphate and the C-6 proR hydrogen from 5-enolpyruvylshikimate-3-phosphate (EPSP) to yield chorismate, which is the branch point compound that serves as the starting substrate for the three terminal pathways of aromatic amino acid biosynthesis. This reaction introduces a second double bond into the aromatic ring system. The protein is Chorismate synthase of Granulibacter bethesdensis (strain ATCC BAA-1260 / CGDNIH1).